The following is a 284-amino-acid chain: WUSCHEL-related homeobox 10 (284 aa).

The segment at 1–43 (MDRTATASWEVMSRRGEQQQQLMMQAPASHNGGSGGGEPARSR) is disordered. The segment at residues 39–103 (PARSRWAPKP…NRRSRSRRRA (65 aa)) is a DNA-binding region (homeobox; WUS-type).

The protein belongs to the WUS homeobox family.

It is found in the nucleus. Transcription factor which may be involved in developmental processes. The sequence is that of WUSCHEL-related homeobox 10 (WOX10) from Oryza sativa subsp. japonica (Rice).